The sequence spans 331 residues: Biotin synthase (331 aa).

Positions 52–277 constitute a Radical SAM core domain; it reads PDVEVEGIIS…RTMLRFAGGR (226 aa). Cys67, Cys71, and Cys74 together coordinate [4Fe-4S] cluster. [2Fe-2S] cluster is bound by residues Cys110, Cys143, Cys202, and Arg272.

The protein belongs to the radical SAM superfamily. Biotin synthase family. In terms of assembly, homodimer. Requires [4Fe-4S] cluster as cofactor. [2Fe-2S] cluster is required as a cofactor.

It catalyses the reaction (4R,5S)-dethiobiotin + (sulfur carrier)-SH + 2 reduced [2Fe-2S]-[ferredoxin] + 2 S-adenosyl-L-methionine = (sulfur carrier)-H + biotin + 2 5'-deoxyadenosine + 2 L-methionine + 2 oxidized [2Fe-2S]-[ferredoxin]. The protein operates within cofactor biosynthesis; biotin biosynthesis; biotin from 7,8-diaminononanoate: step 2/2. Catalyzes the conversion of dethiobiotin (DTB) to biotin by the insertion of a sulfur atom into dethiobiotin via a radical-based mechanism. The sequence is that of Biotin synthase from Mycobacterium sp. (strain JLS).